Reading from the N-terminus, the 501-residue chain is ATP synthase subunit alpha (501 aa).

169–176 (GDRQTGKT) is an ATP binding site.

The protein belongs to the ATPase alpha/beta chains family. As to quaternary structure, F-type ATPases have 2 components, CF(1) - the catalytic core - and CF(0) - the membrane proton channel. CF(1) has five subunits: alpha(3), beta(3), gamma(1), delta(1), epsilon(1). CF(0) has three main subunits: a(1), b(2) and c(9-12). The alpha and beta chains form an alternating ring which encloses part of the gamma chain. CF(1) is attached to CF(0) by a central stalk formed by the gamma and epsilon chains, while a peripheral stalk is formed by the delta and b chains.

It localises to the cell membrane. The enzyme catalyses ATP + H2O + 4 H(+)(in) = ADP + phosphate + 5 H(+)(out). Functionally, produces ATP from ADP in the presence of a proton gradient across the membrane. The alpha chain is a regulatory subunit. This is ATP synthase subunit alpha from Streptococcus pyogenes serotype M2 (strain MGAS10270).